A 450-amino-acid chain; its full sequence is UDP-N-acetylmuramoylalanine--D-glutamate ligase (450 aa).

115–121 (GTNGKST) lines the ATP pocket.

Belongs to the MurCDEF family.

The protein localises to the cytoplasm. It catalyses the reaction UDP-N-acetyl-alpha-D-muramoyl-L-alanine + D-glutamate + ATP = UDP-N-acetyl-alpha-D-muramoyl-L-alanyl-D-glutamate + ADP + phosphate + H(+). Its pathway is cell wall biogenesis; peptidoglycan biosynthesis. Its function is as follows. Cell wall formation. Catalyzes the addition of glutamate to the nucleotide precursor UDP-N-acetylmuramoyl-L-alanine (UMA). In Syntrophotalea carbinolica (strain DSM 2380 / NBRC 103641 / GraBd1) (Pelobacter carbinolicus), this protein is UDP-N-acetylmuramoylalanine--D-glutamate ligase.